The following is a 66-amino-acid chain: Cytochrome c oxidase subunit 26, mitochondrial (66 aa).

The transit peptide at 1–8 (MFFSQVLR) directs the protein to the mitochondrion. Topologically, residues 9–27 (SSARAAPIKRYTGGRIGES) are mitochondrial matrix. A helical transmembrane segment spans residues 28–64 (WVITEGRRLIPEIFQWSAVLSVCLGWPGAVYFFSKAR). Residues 65-66 (KA) are Mitochondrial intermembrane-facing.

The protein belongs to the fungal cytochrome c oxidase subunit 26 family. In terms of assembly, component of the cytochrome c oxidase (complex IV, CIV), a multisubunit enzyme composed of 12 subunits. The complex is composed of a catalytic core of 3 subunits COX1, COX2 and COX3, encoded in the mitochondrial DNA, and 9 supernumerary subunits COX4, COX5A (or COX5B), COX6, COX7, COX8, COX9, COX12, COX13 and COX26, which are encoded in the nuclear genome. The complex exists as a monomer or a dimer and forms supercomplexes (SCs) in the inner mitochondrial membrane with a dimer of ubiquinol-cytochrome c oxidoreductase (cytochrome b-c1 complex, complex III, CIII), resulting in 2 different assemblies (supercomplexes III(2)IV and III(2)IV(2)).

It is found in the mitochondrion inner membrane. In terms of biological role, component of the cytochrome c oxidase, the last enzyme in the mitochondrial electron transport chain which drives oxidative phosphorylation. The respiratory chain contains 3 multisubunit complexes succinate dehydrogenase (complex II, CII), ubiquinol-cytochrome c oxidoreductase (cytochrome b-c1 complex, complex III, CIII) and cytochrome c oxidase (complex IV, CIV), that cooperate to transfer electrons derived from NADH and succinate to molecular oxygen, creating an electrochemical gradient over the inner membrane that drives transmembrane transport and the ATP synthase. Cytochrome c oxidase is the component of the respiratory chain that catalyzes the reduction of oxygen to water. Electrons originating from reduced cytochrome c in the intermembrane space (IMS) are transferred via the dinuclear copper A center (CU(A)) of COX2 and heme A of COX1 to the active site in COX1, a binuclear center (BNC) formed by heme A3 and copper B (CU(B)). The BNC reduces molecular oxygen to 2 water molecules using 4 electrons from cytochrome c in the IMS and 4 protons from the mitochondrial matrix. This Saccharomyces cerevisiae (strain ATCC 204508 / S288c) (Baker's yeast) protein is Cytochrome c oxidase subunit 26, mitochondrial (COX26).